The chain runs to 37 residues: Large ribosomal subunit protein bL36c (37 aa).

Belongs to the bacterial ribosomal protein bL36 family.

It localises to the plastid. It is found in the chloroplast. The chain is Large ribosomal subunit protein bL36c (rpl36) from Euglena gracilis.